Here is a 295-residue protein sequence, read N- to C-terminus: Elongation factor Ts (295 aa).

The segment at 79–82 is involved in Mg(2+) ion dislocation from EF-Tu; sequence TDFV.

The protein belongs to the EF-Ts family.

Its subcellular location is the cytoplasm. Functionally, associates with the EF-Tu.GDP complex and induces the exchange of GDP to GTP. It remains bound to the aminoacyl-tRNA.EF-Tu.GTP complex up to the GTP hydrolysis stage on the ribosome. The polypeptide is Elongation factor Ts (Bacillus cereus (strain ATCC 10987 / NRS 248)).